A 914-amino-acid polypeptide reads, in one-letter code: High affinity cAMP-specific and IBMX-insensitive 3',5'-cyclic phosphodiesterase 8 (914 aa).

2 disordered regions span residues 1 to 27 (MGCS…PLDA) and 113 to 138 (RRAT…HRKS). The segment covering 116-129 (TGSTGTSGTSSSGG) has biased composition (low complexity). The region spanning 312 to 359 (TQQALYTALHRLKEVVLITDDLLRIQYANRATERLLNMRLDEIISKQL) is the PAS domain. A PDEase domain is found at 558 to 893 (TAAIVPAKMK…SQWKKYDEQG (336 aa)). Histidine 640 serves as the catalytic Proton donor. The a divalent metal cation site is built by histidine 644, histidine 682, aspartate 683, and aspartate 799.

The protein belongs to the cyclic nucleotide phosphodiesterase family. PDE8 subfamily. It depends on a divalent metal cation as a cofactor. As to expression, expressed in Malpighian tubules and head.

The catalysed reaction is 3',5'-cyclic AMP + H2O = AMP + H(+). Its pathway is purine metabolism; 3',5'-cyclic AMP degradation; AMP from 3',5'-cyclic AMP: step 1/1. Functionally, hydrolyzes the second messenger cAMP, which is a key regulator of many important physiological processes. Involved in the positive regulation of MAP kinase signaling and in inhibiting oxidative stress-induced cell death. In Drosophila melanogaster (Fruit fly), this protein is High affinity cAMP-specific and IBMX-insensitive 3',5'-cyclic phosphodiesterase 8.